The following is a 161-amino-acid chain: Large ribosomal subunit protein bL9 (161 aa).

It belongs to the bacterial ribosomal protein bL9 family.

Binds to the 23S rRNA. This chain is Large ribosomal subunit protein bL9, found in Blochmanniella floridana.